Reading from the N-terminus, the 785-residue chain is Endonuclease MutS2 (785 aa).

An ATP-binding site is contributed by 335–342 (GPNTGGKT). One can recognise a Smr domain in the interval 710 to 785 (LDLRGERYEN…GSGVTIVELK (76 aa)).

It belongs to the DNA mismatch repair MutS family. MutS2 subfamily. In terms of assembly, homodimer. Binds to stalled ribosomes, contacting rRNA.

In terms of biological role, endonuclease that is involved in the suppression of homologous recombination and thus may have a key role in the control of bacterial genetic diversity. Functionally, acts as a ribosome collision sensor, splitting the ribosome into its 2 subunits. Detects stalled/collided 70S ribosomes which it binds and splits by an ATP-hydrolysis driven conformational change. Acts upstream of the ribosome quality control system (RQC), a ribosome-associated complex that mediates the extraction of incompletely synthesized nascent chains from stalled ribosomes and their subsequent degradation. Probably generates substrates for RQC. This is Endonuclease MutS2 from Bacillus velezensis (strain DSM 23117 / BGSC 10A6 / LMG 26770 / FZB42) (Bacillus amyloliquefaciens subsp. plantarum).